A 247-amino-acid polypeptide reads, in one-letter code: UPF0259 membrane protein BUAPTUC7_273 (247 aa).

The next 6 membrane-spanning stretches (helical) occupy residues 20–40 (IGAIFFISIFATFMNILIDMF), 85–105 (IMESLISKTTLLGSIIILISF), 114–134 (IVSSIRTFFLFFPSLFILNFL), 137–157 (FIIQIGFMLLIIPGILLSIIL), 188–208 (IIGPGVLFWMCGKFILTMLLA), and 218–238 (LFLISNISMNILFSILIIYLF).

This sequence belongs to the UPF0259 family.

It is found in the cell membrane. The chain is UPF0259 membrane protein BUAPTUC7_273 from Buchnera aphidicola subsp. Acyrthosiphon pisum (strain Tuc7).